The chain runs to 406 residues: Cysteine desulfurase (406 aa).

Lysine 226 carries the N6-(pyridoxal phosphate)lysine modification. The active-site Cysteine persulfide intermediate is the cysteine 364.

Belongs to the class-V pyridoxal-phosphate-dependent aminotransferase family. Csd subfamily. In terms of assembly, homodimer. Interacts with SufE and the SufBCD complex composed of SufB, SufC and SufD. The interaction with SufE is required to mediate the direct transfer of the sulfur atom from the S-sulfanylcysteine. Pyridoxal 5'-phosphate is required as a cofactor.

It is found in the cytoplasm. It catalyses the reaction (sulfur carrier)-H + L-cysteine = (sulfur carrier)-SH + L-alanine. The catalysed reaction is L-selenocysteine + AH2 = hydrogenselenide + L-alanine + A + H(+). It participates in cofactor biosynthesis; iron-sulfur cluster biosynthesis. Cysteine desulfurases mobilize the sulfur from L-cysteine to yield L-alanine, an essential step in sulfur metabolism for biosynthesis of a variety of sulfur-containing biomolecules. Component of the suf operon, which is activated and required under specific conditions such as oxidative stress and iron limitation. Acts as a potent selenocysteine lyase in vitro, that mobilizes selenium from L-selenocysteine. Selenocysteine lyase activity is however unsure in vivo. This Escherichia fergusonii (strain ATCC 35469 / DSM 13698 / CCUG 18766 / IAM 14443 / JCM 21226 / LMG 7866 / NBRC 102419 / NCTC 12128 / CDC 0568-73) protein is Cysteine desulfurase.